Consider the following 338-residue polypeptide: MLWRAGMKWMLLILGSLIGAGYASGQEIWQFFGAESGLAIVLFTIMFIFSSYIVMKISFKVQSTHFLPVLEHLMGPWLAKIYDVLIIFYLFSTTMVMIAGGGVTLQMYKLPFWWGITLICIVTVCLFLWDVKGILSINSILIPVLVAGLLYALISFQSTHHHTWTIDLSQQYNWPASITFTSLNILSVVAILSSVGKEMKGLGEAKIASVASGLIFGVISFVYNETLVELAGSLSQFEIPLFAVLEGAPYFLFLCMTAVLCLAIYTTTVAGLLGLSSRLMAFIHMPRWMIVLILLVLMVPFTSFGFSDLIAFLYPIYGMLNLYLLVCLLLYPILSKWK.

This is an uncharacterized protein from Bacillus subtilis (strain 168).